Consider the following 566-residue polypeptide: Putative sulfite reductase [NADPH] hemoprotein beta-component (566 aa).

The [4Fe-4S] cluster site is built by Cys-430, Cys-436, Cys-475, and Cys-479. Cys-479 is a binding site for siroheme.

The protein belongs to the nitrite and sulfite reductase 4Fe-4S domain family. Alpha(8)-beta(8). The alpha component is a flavoprotein, the beta component is a hemoprotein. Siroheme serves as cofactor. Requires [4Fe-4S] cluster as cofactor.

It catalyses the reaction hydrogen sulfide + 3 NADP(+) + 3 H2O = sulfite + 3 NADPH + 4 H(+). The protein operates within sulfur metabolism; hydrogen sulfide biosynthesis; hydrogen sulfide from sulfite (NADPH route): step 1/1. Component of the sulfite reductase complex that catalyzes the 6-electron reduction of sulfite to sulfide. This is one of several activities required for the biosynthesis of L-cysteine from sulfate. In Buchnera aphidicola subsp. Schizaphis graminum (strain Sg), this protein is Putative sulfite reductase [NADPH] hemoprotein beta-component.